A 59-amino-acid chain; its full sequence is Eag protein (59 aa).

This Salmonella phage P22 (Bacteriophage P22) protein is Eag protein (eag).